We begin with the raw amino-acid sequence, 554 residues long: Cytochrome P450 monooxygenase himC (554 aa).

A helical transmembrane segment spans residues 52-72 (YSVASVAIAGFTALVVSVALY). Residues Asn-110, Asn-328, Asn-414, and Asn-425 are each glycosylated (N-linked (GlcNAc...) asparagine). Cys-501 is a binding site for heme.

Belongs to the cytochrome P450 family. The cofactor is heme.

The protein resides in the membrane. The protein operates within secondary metabolite biosynthesis. In terms of biological role, cytochrome P450 monooxygenase; part of the him gene cluster that mediates the biosynthesis of himeic acid A, a ubiquitin-activating enzyme (E1) inhibitor. First, himA, together with the trans-enoyl reductase himH, catalyzes the formation of apolyketide chain, which is then condensed with leucine by the NRPS activity of himA. Dieckmann cyclization and release from himA gives a tetramic acid intermediate as the product of himA PKS-NRPS. HimG then catalyzes alpha-oxidation of the tetramic acid ring, with a subsequent rearrangement to yield apyrone intermediate. Two terminal methyl groups of polyketide and amide side chains are oxidized to carboxylic acids by himC cytochrome P450 monooxygenase to form himeic acid A. Himeic acid A is further converted to himeic acid B and C during culture growth. No gene responsible for pyrone to pyridone conversion was found in the him gene cluster and himeic acid A is non-enzymatically converted to himeic acid C by the incorporation of an ammonium nitrogen atom in a pH5 buffer, and to himeic acid B at a conversion ratio of 50% during incubation in MeOH for 5 days. In Aspergillus japonicus, this protein is Cytochrome P450 monooxygenase himC.